The following is a 306-amino-acid chain: Pantothenate kinase (306 aa).

90 to 97 is a binding site for ATP; the sequence is GSVAVGKS.

It belongs to the prokaryotic pantothenate kinase family.

The protein resides in the cytoplasm. The enzyme catalyses (R)-pantothenate + ATP = (R)-4'-phosphopantothenate + ADP + H(+). Its pathway is cofactor biosynthesis; coenzyme A biosynthesis; CoA from (R)-pantothenate: step 1/5. This Listeria monocytogenes serotype 4a (strain HCC23) protein is Pantothenate kinase.